A 516-amino-acid polypeptide reads, in one-letter code: Putative thymidine phosphorylase (516 aa).

The protein belongs to the thymidine/pyrimidine-nucleoside phosphorylase family. Type 2 subfamily.

The enzyme catalyses thymidine + phosphate = 2-deoxy-alpha-D-ribose 1-phosphate + thymine. This chain is Putative thymidine phosphorylase, found in Methylococcus capsulatus (strain ATCC 33009 / NCIMB 11132 / Bath).